An 89-amino-acid chain; its full sequence is Probable Fe(2+)-trafficking protein (89 aa).

Belongs to the Fe(2+)-trafficking protein family.

Its function is as follows. Could be a mediator in iron transactions between iron acquisition and iron-requiring processes, such as synthesis and/or repair of Fe-S clusters in biosynthetic enzymes. This chain is Probable Fe(2+)-trafficking protein, found in Acinetobacter baumannii (strain SDF).